Consider the following 78-residue polypeptide: Translation initiation factor IF-1, chloroplastic (78 aa).

The 72-residue stretch at 1–72 (MEKQNLIDME…TKGRITYRLR (72 aa)) folds into the S1-like domain.

The protein belongs to the IF-1 family. As to quaternary structure, component of the 30S ribosomal translation pre-initiation complex which assembles on the 30S ribosome in the order IF-2 and IF-3, IF-1 and N-formylmethionyl-tRNA(fMet); mRNA recruitment can occur at any time during PIC assembly.

Its subcellular location is the plastid. The protein localises to the chloroplast. Functionally, one of the essential components for the initiation of protein synthesis. Stabilizes the binding of IF-2 and IF-3 on the 30S subunit to which N-formylmethionyl-tRNA(fMet) subsequently binds. Helps modulate mRNA selection, yielding the 30S pre-initiation complex (PIC). Upon addition of the 50S ribosomal subunit IF-1, IF-2 and IF-3 are released leaving the mature 70S translation initiation complex. This Anthoceros angustus (Hornwort) protein is Translation initiation factor IF-1, chloroplastic.